A 287-amino-acid chain; its full sequence is Pyridoxal kinase PdxY (287 aa).

Substrate is bound by residues Ser9 and 44–45 (TQ). Residues Asp111, Glu147, and Lys180 each contribute to the ATP site. Asp221 serves as a coordination point for substrate.

This sequence belongs to the pyridoxine kinase family. PdxY subfamily. Homodimer. Mg(2+) serves as cofactor.

It catalyses the reaction pyridoxal + ATP = pyridoxal 5'-phosphate + ADP + H(+). Its pathway is cofactor metabolism; pyridoxal 5'-phosphate salvage; pyridoxal 5'-phosphate from pyridoxal: step 1/1. Functionally, pyridoxal kinase involved in the salvage pathway of pyridoxal 5'-phosphate (PLP). Catalyzes the phosphorylation of pyridoxal to PLP. The chain is Pyridoxal kinase PdxY from Paraburkholderia phymatum (strain DSM 17167 / CIP 108236 / LMG 21445 / STM815) (Burkholderia phymatum).